We begin with the raw amino-acid sequence, 160 residues long: S-ribosylhomocysteine lyase (160 aa).

Fe cation-binding residues include His-57, His-61, and Cys-127.

It belongs to the LuxS family. As to quaternary structure, homodimer. Fe cation is required as a cofactor.

The catalysed reaction is S-(5-deoxy-D-ribos-5-yl)-L-homocysteine = (S)-4,5-dihydroxypentane-2,3-dione + L-homocysteine. Its function is as follows. Involved in the synthesis of autoinducer 2 (AI-2) which is secreted by bacteria and is used to communicate both the cell density and the metabolic potential of the environment. The regulation of gene expression in response to changes in cell density is called quorum sensing. Catalyzes the transformation of S-ribosylhomocysteine (RHC) to homocysteine (HC) and 4,5-dihydroxy-2,3-pentadione (DPD). In Streptococcus mutans serotype c (strain ATCC 700610 / UA159), this protein is S-ribosylhomocysteine lyase.